A 438-amino-acid polypeptide reads, in one-letter code: Ribosome biogenesis protein NOP53 (438 aa).

2 disordered regions span residues 1-23 (MVAGKRTGAAKGSRHNKKYWRKG) and 247-346 (HPKY…RKKE). Over residues 12–21 (GSRHNKKYWR) the composition is skewed to basic residues. 3 stretches are compositionally biased toward basic and acidic residues: residues 265–288 (KSMKTGGEAEPKSQRVECDRMTKE), 297–318 (QKLDKEEKRRLEEKAKEQDSHN), and 325–346 (LHKELDEEEKQRHEESEVRKKE).

Belongs to the NOP53 family.

Its subcellular location is the nucleus. The protein localises to the nucleolus. The protein resides in the nucleoplasm. Its function is as follows. May play a role in ribosome biogenesis, being required for integration of the 5S RNP into the ribosomal large subunit. The sequence is that of Ribosome biogenesis protein NOP53 from Caenorhabditis elegans.